A 62-amino-acid chain; its full sequence is Photosystem II reaction center protein Z (62 aa).

2 helical membrane passes run 8 to 28 (AVFA…VVFA) and 41 to 61 (FSGT…NSLI).

This sequence belongs to the PsbZ family. As to quaternary structure, PSII is composed of 1 copy each of membrane proteins PsbA, PsbB, PsbC, PsbD, PsbE, PsbF, PsbH, PsbI, PsbJ, PsbK, PsbL, PsbM, PsbT, PsbY, PsbZ, Psb30/Ycf12, at least 3 peripheral proteins of the oxygen-evolving complex and a large number of cofactors. It forms dimeric complexes.

It localises to the plastid. The protein localises to the chloroplast thylakoid membrane. In terms of biological role, may control the interaction of photosystem II (PSII) cores with the light-harvesting antenna, regulates electron flow through the 2 photosystem reaction centers. PSII is a light-driven water plastoquinone oxidoreductase, using light energy to abstract electrons from H(2)O, generating a proton gradient subsequently used for ATP formation. This is Photosystem II reaction center protein Z from Coffea arabica (Arabian coffee).